A 338-amino-acid polypeptide reads, in one-letter code: tRNA-specific 2-thiouridylase MnmA (338 aa).

ATP contacts are provided by residues 6–13 (AMSGGVDS) and Met32. The active-site Nucleophile is Cys92. An intrachain disulfide couples Cys92 to Cys186. Gly116 is an ATP binding site. Residues 134–136 (KDQ) form an interaction with tRNA region. The active-site Cysteine persulfide intermediate is the Cys186. The segment at 288 to 289 (RY) is interaction with tRNA.

This sequence belongs to the MnmA/TRMU family.

It is found in the cytoplasm. It catalyses the reaction S-sulfanyl-L-cysteinyl-[protein] + uridine(34) in tRNA + AH2 + ATP = 2-thiouridine(34) in tRNA + L-cysteinyl-[protein] + A + AMP + diphosphate + H(+). Catalyzes the 2-thiolation of uridine at the wobble position (U34) of tRNA, leading to the formation of s(2)U34. The sequence is that of tRNA-specific 2-thiouridylase MnmA from Campylobacter jejuni subsp. jejuni serotype O:6 (strain 81116 / NCTC 11828).